The following is a 161-amino-acid chain: Urease accessory protein UreE (161 aa).

Belongs to the UreE family.

The protein localises to the cytoplasm. Its function is as follows. Involved in urease metallocenter assembly. Binds nickel. Probably functions as a nickel donor during metallocenter assembly. This chain is Urease accessory protein UreE, found in Pseudarthrobacter chlorophenolicus (strain ATCC 700700 / DSM 12829 / CIP 107037 / JCM 12360 / KCTC 9906 / NCIMB 13794 / A6) (Arthrobacter chlorophenolicus).